We begin with the raw amino-acid sequence, 178 residues long: Bifunctional protein PyrR (178 aa).

A PRPP-binding motif is present at residues isoleucine 99–threonine 111.

This sequence belongs to the purine/pyrimidine phosphoribosyltransferase family. PyrR subfamily. As to quaternary structure, homodimer and homohexamer; in equilibrium.

It catalyses the reaction UMP + diphosphate = 5-phospho-alpha-D-ribose 1-diphosphate + uracil. Functionally, regulates transcriptional attenuation of the pyrimidine nucleotide (pyr) operon by binding in a uridine-dependent manner to specific sites on pyr mRNA. This disrupts an antiterminator hairpin in the RNA and favors formation of a downstream transcription terminator, leading to a reduced expression of downstream genes. Also displays a weak uracil phosphoribosyltransferase activity which is not physiologically significant. The polypeptide is Bifunctional protein PyrR (Clostridium novyi (strain NT)).